A 474-amino-acid polypeptide reads, in one-letter code: Eukaryotic translation initiation factor 3 subunit L (474 aa).

A PCI domain is found at 255 to 449 (DAIRMFSHIL…DLDYALQGDL (195 aa)).

It belongs to the eIF-3 subunit L family. As to quaternary structure, component of the eukaryotic translation initiation factor 3 (eIF-3) complex.

It localises to the cytoplasm. Functionally, component of the eukaryotic translation initiation factor 3 (eIF-3) complex, which is involved in protein synthesis of a specialized repertoire of mRNAs and, together with other initiation factors, stimulates binding of mRNA and methionyl-tRNAi to the 40S ribosome. The eIF-3 complex specifically targets and initiates translation of a subset of mRNAs involved in cell proliferation. This Chaetomium globosum (strain ATCC 6205 / CBS 148.51 / DSM 1962 / NBRC 6347 / NRRL 1970) (Soil fungus) protein is Eukaryotic translation initiation factor 3 subunit L.